A 182-amino-acid polypeptide reads, in one-letter code: Large ribosomal subunit protein eL15 (182 aa).

It belongs to the eukaryotic ribosomal protein eL15 family.

The protein is Large ribosomal subunit protein eL15 (rpl15e) of Methanothermobacter thermautotrophicus (strain ATCC 29096 / DSM 1053 / JCM 10044 / NBRC 100330 / Delta H) (Methanobacterium thermoautotrophicum).